The sequence spans 149 residues: Large ribosomal subunit protein uL15 (149 aa).

Positions 1 to 58 (MKLHNLRPAKGGEVKARKRVGRGYGSGLGHNAGRGRDGQNSRSGGGVRPGFEGGQMPL) are disordered. 2 stretches are compositionally biased toward gly residues: residues 22–32 (RGYGSGLGHNA) and 43–53 (SGGGVRPGFEG).

The protein belongs to the universal ribosomal protein uL15 family. As to quaternary structure, part of the 50S ribosomal subunit.

In terms of biological role, binds to the 23S rRNA. This is Large ribosomal subunit protein uL15 from Finegoldia magna (strain ATCC 29328 / DSM 20472 / WAL 2508) (Peptostreptococcus magnus).